Reading from the N-terminus, the 175-residue chain is uncharacterized protein (175 aa).

2 disordered regions span residues 68-111 (NKSN…DDDQ) and 154-175 (PERAKRESDDEDDMFPIKKLTT). A compositionally biased stretch (low complexity) spans 95-106 (EEQPMMPYQQPP).

It belongs to the asfivirus H171R family.

It is found in the virion. This is an uncharacterized protein from African swine fever virus (isolate Pig/Kenya/KEN-50/1950) (ASFV).